A 196-amino-acid polypeptide reads, in one-letter code: Pyridoxine/pyridoxamine 5'-phosphate oxidase (196 aa).

FMN is bound by residues 46-51, 61-62, Arg67, Lys68, and Gln90; these read RNVLYK and FT. Position 51 (Lys51) interacts with substrate. Tyr108, Arg112, and Ser116 together coordinate substrate. Residues 125–126 and Trp169 each bind FMN; that span reads QS. 175–177 contributes to the substrate binding site; sequence RLH. Arg179 is a binding site for FMN.

Belongs to the pyridoxamine 5'-phosphate oxidase family. As to quaternary structure, homodimer. Requires FMN as cofactor.

It catalyses the reaction pyridoxamine 5'-phosphate + O2 + H2O = pyridoxal 5'-phosphate + H2O2 + NH4(+). The catalysed reaction is pyridoxine 5'-phosphate + O2 = pyridoxal 5'-phosphate + H2O2. It participates in cofactor metabolism; pyridoxal 5'-phosphate salvage; pyridoxal 5'-phosphate from pyridoxamine 5'-phosphate: step 1/1. It functions in the pathway cofactor metabolism; pyridoxal 5'-phosphate salvage; pyridoxal 5'-phosphate from pyridoxine 5'-phosphate: step 1/1. Catalyzes the oxidation of either pyridoxine 5'-phosphate (PNP) or pyridoxamine 5'-phosphate (PMP) into pyridoxal 5'-phosphate (PLP). The polypeptide is Pyridoxine/pyridoxamine 5'-phosphate oxidase (Coxiella burnetii (strain RSA 493 / Nine Mile phase I)).